Consider the following 52-residue polypeptide: UPF0181 protein HI_1434.2 (52 aa).

This sequence belongs to the UPF0181 family.

In Haemophilus influenzae (strain ATCC 51907 / DSM 11121 / KW20 / Rd), this protein is UPF0181 protein HI_1434.2.